Reading from the N-terminus, the 1783-residue chain is Collagen alpha-1(XXVII) chain A (1783 aa).

A signal peptide spans 1–35; that stretch reads MNLATRRRVRRTSRLVAKRALLLCILLYCTSFGFT. A Laminin G-like domain is found at 73–235; the sequence is TTRARVTTPT…NICSAIRRQC (163 aa). Disordered stretches follow at residues 288 to 312, 327 to 524, 553 to 744, 772 to 1461, and 1512 to 1546; these read SSSV…LALM, HKPS…PRTP, VGAP…APGP, PGNM…GDIG, and GNPG…LPGP. A compositionally biased stretch (low complexity) spans 403–415; it reads KPTSVPKPNPTKN. A compositionally biased stretch (pro residues) spans 436-447; that stretch reads LPAPKPTVPKRP. The span at 462–494 shows a compositional bias: polar residues; it reads HTTPLTPKSTLAPNSTSKKPLPTLKSTSFTTAA. The interval 553–1547 is triple-helical region; the sequence is VGAPGLKGDQ…RGPPGLPGPP (995 aa). One can recognise a Collagen-like 1 domain in the interval 554–608; it reads GAPGLKGDQGESGLPGPPGKPGQPGMRGPRGPPGPHGKPGRPGPTGLKGKKGDPG. Low complexity-rich tracts occupy residues 622 to 633, 651 to 661, 735 to 744, 817 to 829, and 861 to 870; these read VGLPGPVGLVGV, EPGEQGPVGEA, EPGVIGAPGP, PGPQ…IGPS, and ARGLPGPRGA. Collagen-like domains follow at residues 818–873 and 845–902; these read GPQG…AAGR and GKPG…GALG. Over residues 926 to 935 the composition is skewed to gly residues; it reads GFIGPGGEAG. Pro residues predominate over residues 967 to 976; that stretch reads GGPPGPPGSP. 2 stretches are compositionally biased toward low complexity: residues 978-988 and 1098-1129; these read SPGSRGPIGIR and SIGL…AGPD. Residues 986–1043 form the Collagen-like 4 domain; the sequence is GIRGPKGRRGPRGPDGVPGEIGTEGKKGPDGPPGKIGFPGHAGKIGESGEVGPKGFPG. Basic and acidic residues-rich tracts occupy residues 1131-1158, 1170-1182, and 1257-1267; these read TKGE…KDGP, PEGK…ERGK, and AKGEQGDDGKV. One can recognise a Collagen-like 5 domain in the interval 1269–1326; sequence GPTGAPGLRGPVGKRGDRGEPGDPGYVGQQGVDGLRGKPGAPGLPGDPGPRGTQGPKG. Low complexity-rich tracts occupy residues 1334–1349 and 1396–1409; these read KGKQ…RGSP and LPGK…VGVI. 2 consecutive Collagen-like domains span residues 1446–1503 and 1497–1549; these read GPQG…GLAG and GRGG…PPGI. Residues 1537–1546 show a composition bias toward pro residues; it reads PRGPPGLPGP. The propeptide at 1551–1783 is C-terminal propeptide; the sequence is LAMNQDFGLG…HLEVGPVCFL (233 aa). One can recognise a Fibrillar collagen NC1 domain in the interval 1589 to 1783; it reads PEILRTLDYL…HLEVGPVCFL (195 aa). Cystine bridges form between cysteine 1619-cysteine 1651, cysteine 1660-cysteine 1781, and cysteine 1696-cysteine 1734. Positions 1637, 1639, 1642, and 1645 each coordinate Ca(2+). Asparagine 1698 carries an N-linked (GlcNAc...) asparagine glycan.

Belongs to the fibrillar collagen family. In terms of tissue distribution, expressed dynamically in the notochord from late epiboly, spreading to the anterior notochord by 24 hpf, and then throughout the notochord by 30 hpf. Subsequently, notochordal expression becomes restricted to the distal tip of the tail by 48 hpf and is no longer detectable by 72 hpf. Also expressed throughout the floor plate and hypochord at 24 hpf, and in forming head cartilages and the first forming tooth.

It localises to the secreted. It is found in the extracellular space. Its subcellular location is the extracellular matrix. May play a role during the calcification of cartilage and the transition of cartilage to bone. Together with col27a1b, plays a role in development of the notochord and axial skeleton. The polypeptide is Collagen alpha-1(XXVII) chain A (Danio rerio (Zebrafish)).